Consider the following 418-residue polypeptide: uncharacterized protein (418 aa).

One can recognise an N-acetyltransferase domain in the interval 7–158 (IDVRPIAEAE…TGLDPRWSGP (152 aa)). Residues 87–89 (VTV) and 95–100 (RRGLLT) contribute to the acetyl-CoA site. Tyr128 acts as the Proton donor in catalysis. The active-site Proton acceptor; via carboxylate is Phe418.

Belongs to the acetyltransferase Eis family. Homohexamer; trimer of dimers.

This is an uncharacterized protein from Streptomyces avermitilis (strain ATCC 31267 / DSM 46492 / JCM 5070 / NBRC 14893 / NCIMB 12804 / NRRL 8165 / MA-4680).